The chain runs to 216 residues: Imidazole glycerol phosphate synthase subunit HisH (216 aa).

In terms of domain architecture, Glutamine amidotransferase type-1 spans 2-216 (SIAIIDYGSG…LISNFLRWKP (215 aa)). Cys-88 serves as the catalytic Nucleophile. Active-site residues include His-196 and Glu-198.

As to quaternary structure, heterodimer of HisH and HisF.

The protein resides in the cytoplasm. It catalyses the reaction 5-[(5-phospho-1-deoxy-D-ribulos-1-ylimino)methylamino]-1-(5-phospho-beta-D-ribosyl)imidazole-4-carboxamide + L-glutamine = D-erythro-1-(imidazol-4-yl)glycerol 3-phosphate + 5-amino-1-(5-phospho-beta-D-ribosyl)imidazole-4-carboxamide + L-glutamate + H(+). The enzyme catalyses L-glutamine + H2O = L-glutamate + NH4(+). The protein operates within amino-acid biosynthesis; L-histidine biosynthesis; L-histidine from 5-phospho-alpha-D-ribose 1-diphosphate: step 5/9. In terms of biological role, IGPS catalyzes the conversion of PRFAR and glutamine to IGP, AICAR and glutamate. The HisH subunit catalyzes the hydrolysis of glutamine to glutamate and ammonia as part of the synthesis of IGP and AICAR. The resulting ammonia molecule is channeled to the active site of HisF. The chain is Imidazole glycerol phosphate synthase subunit HisH from Bradyrhizobium diazoefficiens (strain JCM 10833 / BCRC 13528 / IAM 13628 / NBRC 14792 / USDA 110).